We begin with the raw amino-acid sequence, 101 residues long: Putative septation protein SpoVG (101 aa).

It belongs to the SpoVG family.

In terms of biological role, could be involved in septation. The sequence is that of Putative septation protein SpoVG from Staphylococcus saprophyticus subsp. saprophyticus (strain ATCC 15305 / DSM 20229 / NCIMB 8711 / NCTC 7292 / S-41).